A 115-amino-acid chain; its full sequence is Ribonuclease P protein component (115 aa).

It belongs to the RnpA family. As to quaternary structure, consists of a catalytic RNA component (M1 or rnpB) and a protein subunit.

The catalysed reaction is Endonucleolytic cleavage of RNA, removing 5'-extranucleotides from tRNA precursor.. In terms of biological role, RNaseP catalyzes the removal of the 5'-leader sequence from pre-tRNA to produce the mature 5'-terminus. It can also cleave other RNA substrates such as 4.5S RNA. The protein component plays an auxiliary but essential role in vivo by binding to the 5'-leader sequence and broadening the substrate specificity of the ribozyme. The chain is Ribonuclease P protein component from Bacillus cereus (strain B4264).